A 313-amino-acid polypeptide reads, in one-letter code: NADH-ubiquinone oxidoreductase chain 1 (313 aa).

Transmembrane regions (helical) follow at residues 7 to 27 (LIGS…LTLL), 73 to 93 (IFYY…WMSM), 104 to 124 (LGVL…MVAG), 150 to 170 (LALI…LNFF), 175 to 195 (YMWF…SCLA), 226 to 246 (LIFL…SVIF), 250 to 270 (DIYS…FIWV), and 293 to 313 (MSLN…SMLF).

Belongs to the complex I subunit 1 family.

The protein resides in the mitochondrion inner membrane. It catalyses the reaction a ubiquinone + NADH + 5 H(+)(in) = a ubiquinol + NAD(+) + 4 H(+)(out). Its function is as follows. Core subunit of the mitochondrial membrane respiratory chain NADH dehydrogenase (Complex I) that is believed to belong to the minimal assembly required for catalysis. Complex I functions in the transfer of electrons from NADH to the respiratory chain. The immediate electron acceptor for the enzyme is believed to be ubiquinone. The sequence is that of NADH-ubiquinone oxidoreductase chain 1 from Aedes aegypti (Yellowfever mosquito).